The sequence spans 683 residues: Rhophilin-2-A (683 aa).

One can recognise an REM-1 domain in the interval 25-99 (KSIAQTGRSK…LERLNISVEV (75 aa)). Residues 110 to 501 (PLIPLGLKET…TDIFQRLGPL (392 aa)) form the BRO1 domain. A PDZ domain is found at 515–592 (KICITKEDGD…QSIEIQVISI (78 aa)).

The protein belongs to the RHPN family. Interacts with RhoA.

Its subcellular location is the cytoplasm. The protein localises to the perinuclear region. Functionally, binds specifically to GTP-Rho. This chain is Rhophilin-2-A (rhpn2-a), found in Xenopus laevis (African clawed frog).